Consider the following 523-residue polypeptide: Cytokinin dehydrogenase 3 (523 aa).

The first 31 residues, 1–31 (MASYNLRSQVRLIAITIVIIITLSTPITTNT), serve as a signal peptide directing secretion. The region spanning 66-243 (TKIFPSAVLI…TRARIKLEVA (178 aa)) is the FAD-binding PCMH-type domain. 3 residues coordinate FAD: alanine 100, glycine 102, and glycine 104. Position 105 is a pros-8alpha-FAD histidine (histidine 105). FAD is bound by residues serine 106 and glutamine 110. A glycan (N-linked (GlcNAc...) asparagine) is linked at asparagine 153. 5 residues coordinate FAD: aspartate 167, threonine 172, serine 178, isoleucine 182, and isoleucine 233. Asparagine 408 carries N-linked (GlcNAc...) asparagine glycosylation. FAD is bound by residues tyrosine 476, serine 511, and glutamine 514.

It belongs to the oxygen-dependent FAD-linked oxidoreductase family. FAD is required as a cofactor. In terms of tissue distribution, very weak expression in the young shoot tissues around two weeks after germination. Present in the center of the floral meristem and the boundary between long stamen primordia and gynoecial primordia.

It is found in the endoplasmic reticulum. It localises to the vacuole. It carries out the reaction N(6)-dimethylallyladenine + A + H2O = 3-methyl-2-butenal + adenine + AH2. Its function is as follows. Catalyzes the oxidation of cytokinins, a family of N(6)-substituted adenine derivatives that are plant hormones, where the substituent is an isopentenyl group. Catalyzes in vitro the oxidation of various types of cytokinin nucleotides that are known as direct products of cytokinin biosynthesis. In association with CKX5 regulates the activity of the reproductive meristems, flower organ size and ovule formation. This Arabidopsis thaliana (Mouse-ear cress) protein is Cytokinin dehydrogenase 3 (CKX3).